A 276-amino-acid polypeptide reads, in one-letter code: Malectin-A (276 aa).

Residues 1–26 form the signal peptide; the sequence is MLSIRTVLGPLATILLTVLGPFGAHG. Residues 27–253 lie on the Lumenal side of the membrane; that stretch reads SGLADKVIWA…TPNPYASDNS (227 aa). Positions 67, 89, 116, 117, and 186 each coordinate a carbohydrate. The tract at residues 204-247 is disordered; it reads PMLQPHPGLEKKEEEEEEEEEEGSTSKKQINKNRVQSGPRTPNP. Over residues 216–226 the composition is skewed to acidic residues; the sequence is EEEEEEEEEEG. Residues 229-247 show a composition bias toward polar residues; sequence SKKQINKNRVQSGPRTPNP. Residue N252 is glycosylated (N-linked (GlcNAc...) asparagine). Residues 254–274 form a helical membrane-spanning segment; the sequence is SLMFPILVAFGVFIPTLFCLC. At 275 to 276 the chain is on the cytoplasmic side; that stretch reads RL.

The protein belongs to the malectin family. Widely expressed throughout development including the anterior neuroectoderm and neural crest at stages 18 and 20, and the retina, hatching gland, otic vesicle, epibranchial placodes, pronephros and tail tip of later states. At stage 41, expressed in the liver, pancreas, branchial arches and proctodeum. Expressed broadly in adults in fat, intestine, gall bladder, eye, muscle, kidney, stomach, liver, heart, pancreas and lung.

It is found in the endoplasmic reticulum membrane. Carbohydrate-binding protein with a strong ligand preference for Glc2-N-glycan. May play a role in the early steps of protein N-glycosylation. Can bind di- or higher oligomers but not monomers of glucose, including maltose, maltotriose, maltotetraose, maltoheptaose, nigerose, kojibose, cellobiose and isomaltose, although based on their subcellular locations, these are unlikely to all be physiological ligands. This Xenopus laevis (African clawed frog) protein is Malectin-A.